A 459-amino-acid polypeptide reads, in one-letter code: Glutamyl-tRNA(Gln) amidotransferase subunit A, mitochondrial (459 aa).

Active-site charge relay system residues include lysine 37 and serine 114. The active-site Acyl-ester intermediate is the serine 138.

This sequence belongs to the amidase family. GatA subfamily. In terms of assembly, subunit of the heterotrimeric GatFAB amidotransferase (AdT) complex, composed of A, B and F subunits.

It is found in the mitochondrion. The enzyme catalyses L-glutamyl-tRNA(Gln) + L-glutamine + ATP + H2O = L-glutaminyl-tRNA(Gln) + L-glutamate + ADP + phosphate + H(+). In terms of biological role, allows the formation of correctly charged Gln-tRNA(Gln) through the transamidation of misacylated Glu-tRNA(Gln) in the mitochondria. The reaction takes place in the presence of glutamine and ATP through an activated gamma-phospho-Glu-tRNA(Gln). This Yarrowia lipolytica (strain CLIB 122 / E 150) (Yeast) protein is Glutamyl-tRNA(Gln) amidotransferase subunit A, mitochondrial.